The chain runs to 447 residues: UPF0210 protein LCK_00974 (447 aa).

This sequence belongs to the UPF0210 family. Homodimer.

The polypeptide is UPF0210 protein LCK_00974 (Leuconostoc citreum (strain KM20)).